The sequence spans 2575 residues: Non-reducing polyketide synthase pks11 (2575 aa).

The Starter acyltransferase (SAT) domain maps to 89–228; the sequence is LANIILSPLV…ASKTVSTLQG (140 aa). C129 (nucleophile; for transacylase activity) is an active-site residue. H247 acts as the Proton donor/acceptor; for transacylase activity in catalysis. The 418-residue stretch at 373 to 790 folds into the Ketosynthase family 3 (KS3) domain; it reads EDDIAVVGMS…GSNASAVVTE (418 aa). Active-site for beta-ketoacyl synthase activity residues include C538, H673, and H713. Residues 901–1192 form the Malonyl-CoA:ACP transacylase (MAT) domain; that stretch reads FGGQISTYVG…TNMASRALGS (292 aa). Positions 1276–1409 are N-terminal hotdog fold; sequence PKGLWSFIDY…GQIIFVSTDN (134 aa). The 311-residue stretch at 1276-1586 folds into the PKS/mFAS DH domain; that stretch reads PKGLWSFIDY…YHKVAKATMS (311 aa). The segment at 1307-1584 is product template (PT) domain; it reads LVSGHIIAQT…VNYHKVAKAT (278 aa). The active-site Proton acceptor; for dehydratase activity is the H1311. A C-terminal hotdog fold region spans residues 1437–1586; sequence ADDIIQGRNI…YHKVAKATMS (150 aa). D1493 functions as the Proton donor; for dehydratase activity in the catalytic mechanism. Residues 1597 to 1606 show a composition bias toward polar residues; it reads TTSTSTNVKS. A disordered region spans residues 1597-1636; the sequence is TTSTSTNVKSSPAAAEGSSPVENGASGSGSKAKKTKSGAG. Residues 1637 to 1711 form the Carrier domain; it reads QDVVNKTKGL…GLVQIIKSTL (75 aa). An O-(pantetheine 4'-phosphoryl)serine modification is found at S1671. The tract at residues 1713 to 1762 is disordered; that stretch reads VSDDEEGSDQEGSEASSSESSTTFTPSTTATTVSDVEDNGNEKSIGKEKS. A compositionally biased stretch (acidic residues) spans 1714 to 1724; it reads SDDEEGSDQEG. Residues 1725–1746 show a composition bias toward low complexity; it reads SEASSSESSTTFTPSTTATTVS. Residues 1752–1762 are compositionally biased toward basic and acidic residues; the sequence is GNEKSIGKEKS. The methyltransferase domain stretch occupies residues 1835–2130; the sequence is LTRIPHDPQH…HIDWTDGNSP (296 aa). The region spanning 2204-2448 is the Thioester reductase (TE) domain; the sequence is ITGATGSLGS…LCWTPVDDVA (245 aa).

The cofactor is pantetheine 4'-phosphate.

Its pathway is secondary metabolite biosynthesis. Functionally, non-reducing polyketide synthase; part of the gene cluster that mediates the biosynthesis of mitorubrinol and mitorubrinic acid, two virulence factors that improve T.marneffei intracellular survival in macrophages. The two polyketide synthases pks12 and pks11 are probably responsible for sequential use in the biosynthesis of mitorubrinol and mitorubrinic acid. The first part of the biosynthesis is probably catalyzed by pks12, which synthesized orsellinic acid. This tetraketide is then used as a starter unit for pks11, which possesses a SAT domain, in the second part of the biosynthesis. Pks11, contains a methyltransferase domain, also served that methylates the products, using a methyl group from S-adenosylmethionine. This is Non-reducing polyketide synthase pks11 from Talaromyces marneffei (Penicillium marneffei).